Consider the following 469-residue polypeptide: uncharacterized protein (469 aa).

Disordered regions lie at residues 248–314 and 327–418; these read RDDN…EPES and QMDQ…PRPT. Composition is skewed to polar residues over residues 292-305 and 350-365; these read ESSN…NAAS and TARQ…PNTV. The span at 366-377 shows a compositional bias: low complexity; it reads TATSASTPASTS.

This is an uncharacterized protein from Cryphonectria parasitica (Chestnut blight fungus).